Consider the following 130-residue polypeptide: Small ribosomal subunit protein uS9 (130 aa).

This sequence belongs to the universal ribosomal protein uS9 family.

In Haemophilus influenzae (strain 86-028NP), this protein is Small ribosomal subunit protein uS9.